Reading from the N-terminus, the 469-residue chain is Glutamate--tRNA ligase 2 (469 aa).

The 'HIGH' region motif lies at P11–G21. Positions K238 to R242 match the 'KMSKS' region motif. An ATP-binding site is contributed by K241.

This sequence belongs to the class-I aminoacyl-tRNA synthetase family. Glutamate--tRNA ligase type 1 subfamily. In terms of assembly, monomer.

It is found in the cytoplasm. The catalysed reaction is tRNA(Glu) + L-glutamate + ATP = L-glutamyl-tRNA(Glu) + AMP + diphosphate. Its function is as follows. Catalyzes the attachment of glutamate to tRNA(Glu) in a two-step reaction: glutamate is first activated by ATP to form Glu-AMP and then transferred to the acceptor end of tRNA(Glu). The protein is Glutamate--tRNA ligase 2 of Ehrlichia chaffeensis (strain ATCC CRL-10679 / Arkansas).